Here is a 470-residue protein sequence, read N- to C-terminus: Cysteine--tRNA ligase 1 (470 aa).

Residue Cys29 participates in Zn(2+) binding. The 'HIGH' region signature appears at 31-41; sequence PTVYDDAHIGN. Zn(2+) contacts are provided by Cys221, His246, and Glu250. The 'KMSKS' region motif lies at 279 to 283; that stretch reads KMSKS. Lys282 is a binding site for ATP.

Belongs to the class-I aminoacyl-tRNA synthetase family. Monomer. It depends on Zn(2+) as a cofactor.

The protein resides in the cytoplasm. The catalysed reaction is tRNA(Cys) + L-cysteine + ATP = L-cysteinyl-tRNA(Cys) + AMP + diphosphate. This chain is Cysteine--tRNA ligase 1, found in Burkholderia lata (strain ATCC 17760 / DSM 23089 / LMG 22485 / NCIMB 9086 / R18194 / 383).